Reading from the N-terminus, the 351-residue chain is UDP-N-acetylenolpyruvoylglucosamine reductase (351 aa).

Residues histidine 25–leucine 196 enclose the FAD-binding PCMH-type domain. Residue arginine 173 is part of the active site. Serine 246 (proton donor) is an active-site residue. Glutamate 343 is an active-site residue.

Belongs to the MurB family. Requires FAD as cofactor.

The protein resides in the cytoplasm. It carries out the reaction UDP-N-acetyl-alpha-D-muramate + NADP(+) = UDP-N-acetyl-3-O-(1-carboxyvinyl)-alpha-D-glucosamine + NADPH + H(+). It functions in the pathway cell wall biogenesis; peptidoglycan biosynthesis. Its function is as follows. Cell wall formation. The polypeptide is UDP-N-acetylenolpyruvoylglucosamine reductase (Xylella fastidiosa (strain M23)).